We begin with the raw amino-acid sequence, 883 residues long: Receptor-like protein 40 (883 aa).

Positions 1 to 21 (MSELLFSLNFLLLLLLSCVSP) are cleaved as a signal peptide. Topologically, residues 22–846 (SSFFTFNNPV…EDEQVLNWKA (825 aa)) are extracellular. N58, N91, and N109 each carry an N-linked (GlcNAc...) asparagine glycan. LRR repeat units follow at residues 97-121 (FHHLRSLLLPHNNFTSSSISSKFGM) and 122-143 (LNNLEVLSLSSSGFLAQVPFSF). The N-linked (GlcNAc...) asparagine glycan is linked to N145. 14 LRR repeats span residues 146–169 (LSMLSALVLSNNDLTGSLSFARNL), 170–195 (RKLRVLDVSYNHFSGILNPNSSLFEL), 197–219 (HIIYLNLRYNNFTSSSLPYEFGN), 220–244 (LNKLEVLDVSSNSFFGQVPPTISNL), 246–267 (QLTELYLPLNHFTGSLPLVQNL), 268–291 (TKLSILHLFGNHFSGTIPSSLFTM), 293–316 (FLSYLSLKGNNLNGSIEVPNSSSS), 317–340 (SRLESLHLGENHFEGKILEPISKL), 342–364 (NLKELDLSFLNTSYPIDLSLFSS), 365–390 (LKSLLLLDLSGDWISKASLTLDSYIP), 391–412 (STLEVLRLEHCDISDFPNVFKT), 413–437 (LHNLEYIALSNNRISGKFPEWLWSL), 439–462 (RLSSVFITDNLLTGFEGSSEVLVN), and 463–486 (SSVQILSLDTNSLEGALPHLPLSI). 4 N-linked (GlcNAc...) asparagine glycosylation sites follow: N189, N207, N243, and N266. N305 and N312 each carry an N-linked (GlcNAc...) asparagine glycan. N-linked (GlcNAc...) asparagine glycosylation is present at N352. N-linked (GlcNAc...) asparagine glycosylation occurs at N462. An LRR 17; degenerate repeat occupies 487-506 (NYFSAIDNRFGGDIPLSICN). 2 N-linked (GlcNAc...) asparagine glycosylation sites follow: N506 and N519. 10 LRR repeats span residues 507–528 (RSSLDVLDLSYNNFTGPIPPCL), 529–552 (SNLLYLKLRKNNLEGSIPDKYYED), 554–576 (PLRSLDVGYNRLTGKLPRSLINC), 578–600 (ALQFLSVDHNGIKDTFPFSLKAL), 601–624 (PKLQVLLLSSNKFYGPLSPPNEGP), 627–651 (FPELRILEIAGNKLTGSLSSDFFVN), 701–724 (TSSATIDFSGNRLEGEIPESIGLL), 725–747 (KALIALNLSNNAFTGHIPLSFAN), 748–772 (LKKMESLDLSSNQLSGTIPNGLRTL), and 774–797 (FLAYVNVSHNQLIGEIPQGTQITG). The N-linked (GlcNAc...) asparagine glycan is linked to N575. A glycan (N-linked (GlcNAc...) asparagine) is linked at N731. The N-linked (GlcNAc...) asparagine glycan is linked to N779. Residues 847-867 (VAIGYGIGVLLGLAIAQLISL) traverse the membrane as a helical segment. Residues 868–883 (YKPKWLASLVIKSRNC) lie on the Cytoplasmic side of the membrane.

This sequence belongs to the RLP family.

It is found in the cell membrane. This chain is Receptor-like protein 40, found in Arabidopsis thaliana (Mouse-ear cress).